A 453-amino-acid polypeptide reads, in one-letter code: MKTKFCTGGEAEPSPLGLLLSCGGSAAPTPGVGQQRDAAGELESKQLGGRSQPLALPPPPPPPLPLPPPPSPPLADEQPEPRTRRRAYLWCKEFLPGAWRGLREDQFHISVIRGGLSNMLFQCSLPDSIASVGDEPRKVLLRLYGAILKMRSCNKEGSEQAQNENEFQGAEAMVLESVMFAILAERSLGPKLYGIFPQGRLEQFIPSRRLDTEELCLPDISAEIAEKMATFHGMKMPFNKEPKWLFGTMEKYLNQVLRLKFSREARVQQLHKFLSYNLPLELENLRSLLQYTRSPVVFCHNDCQEGNILLLEGQENSEKQKLMLIDFEYSSYNYRGFDIGNHFCEWMYDYTYEKYPFFRANIQKYPTRKQQLHFISSYLTTFQNDFESLSSEEQSATKEDMLLEVNRFALASHFLWGLWSIVQAKISSIEFGYMEYAQARFDAYFDQKRKLGV.

The interval 22 to 81 (CGGSAAPTPGVGQQRDAAGELESKQLGGRSQPLALPPPPPPPLPLPPPPSPPLADEQPEP) is disordered. Pro residues predominate over residues 55–73 (ALPPPPPPPLPLPPPPSPP). The residue at position 71 (S71) is a Phosphoserine. Residues 113–119 (RGGLSNM), R142, and 203–209 (QFIPSRR) each bind ATP. 115 to 117 (GLS) lines the phosphocholine pocket. An N6-acetyllysine modification is found at K243. At S275 the chain carries Phosphoserine. Residues Q304 and D326 each coordinate ATP.

It belongs to the choline/ethanolamine kinase family. Heterodimer with CHKB. Homodimer. In terms of assembly, monomer; acetylation by KAT5 promotes dissociation of the homodimer and monomerization. In terms of processing, phosphorylated at Ser-275 by AMPK in response to glucose deprivation, leading to localization to lipid droplets. Post-translationally, acetylated by KAT5 at Lys-243 following phosphorylation by AMPK, leading to monomerization and conversion into a tyrosine-protein kinase. Testis, brain, lung, kidney and liver.

It localises to the cytoplasm. It is found in the cytosol. Its subcellular location is the lipid droplet. The catalysed reaction is choline + ATP = phosphocholine + ADP + H(+). The enzyme catalyses ethanolamine + ATP = phosphoethanolamine + ADP + H(+). It catalyses the reaction L-tyrosyl-[protein] + ATP = O-phospho-L-tyrosyl-[protein] + ADP + H(+). The protein operates within phospholipid metabolism; phosphatidylcholine biosynthesis; phosphocholine from choline: step 1/1. It participates in phospholipid metabolism; phosphatidylethanolamine biosynthesis; phosphatidylethanolamine from ethanolamine: step 1/3. Functionally, plays a key role in phospholipid biosynthesis by catalyzing the phosphorylation of free choline to phosphocholine, the first step in phosphatidylcholine biosynthesis. Also phosphorylates ethanolamine, thereby contributing to phosphatidylethanolamine biosynthesis. Has higher activity with choline. In terms of biological role, this isoform plays a key role in lipolysis of lipid droplets following glucose deprivation. In response to glucose deprivation, phosphorylated by AMPK, promoting localization to lipid droplets. Phosphorylation is followed by acetylation by KAT5, leading to dissociation of the homodimer into a monomer. Monomeric CHKA isoform 1 is converted into a tyrosine-protein kinase, which phosphorylates lipid droplet structural proteins PLIN2 and PLIN3, leading to lipolysis of lipid droplets. In Rattus norvegicus (Rat), this protein is Choline kinase alpha (Chka).